Here is a 298-residue protein sequence, read N- to C-terminus: Pyridoxal kinase PdxY (298 aa).

Substrate is bound at residue Ser17. Positions 119 and 156 each coordinate ATP. Asp234 is a substrate binding site.

This sequence belongs to the pyridoxine kinase family. PdxY subfamily. In terms of assembly, homodimer. Mg(2+) serves as cofactor.

It catalyses the reaction pyridoxal + ATP = pyridoxal 5'-phosphate + ADP + H(+). The protein operates within cofactor metabolism; pyridoxal 5'-phosphate salvage; pyridoxal 5'-phosphate from pyridoxal: step 1/1. Pyridoxal kinase involved in the salvage pathway of pyridoxal 5'-phosphate (PLP). Catalyzes the phosphorylation of pyridoxal to PLP. This chain is Pyridoxal kinase PdxY, found in Deinococcus radiodurans (strain ATCC 13939 / DSM 20539 / JCM 16871 / CCUG 27074 / LMG 4051 / NBRC 15346 / NCIMB 9279 / VKM B-1422 / R1).